Here is a 601-residue protein sequence, read N- to C-terminus: Glutathione-regulated potassium-efflux system protein KefB (601 aa).

Transmembrane regions (helical) follow at residues 4–24, 29–49, 55–75, 87–107, 115–135, 152–172, 177–197, 207–227, 230–250, 268–288, 291–311, 324–344, and 356–376; these read SDFLLAGVLFLFAAVAAVPLA, IGAVLGYLLAGIAIGPWGLGF, EILHFSELGVVFLMFIIGLEL, IFGVGAAQVLLSSALLAGLLM, AAVVGGIGLAMSSTAMALQLM, VLLFQDLAVIPALALVPLLAG, HFDWMKIGMKVLAFVGMLIGG, FIAASGVREVFTAATLLLVLG, LFMDALGLSMALGTFIAGVLL, GLLLGLFFISVGMSLNLGVLY, LLWVVISVVVLVAVKILVLYL, MQFAGVLSQGGEFAFVLFSTA, and ALLLVTVTLSMMTTPLLMKLV. Residues 400–519 enclose the RCK N-terminal domain; it reads KPQVIVVGFG…AGVTQFSRET (120 aa).

It belongs to the monovalent cation:proton antiporter 2 (CPA2) transporter (TC 2.A.37) family. KefB subfamily. In terms of assembly, interacts with the regulatory subunit KefG.

It localises to the cell inner membrane. Functionally, pore-forming subunit of a potassium efflux system that confers protection against electrophiles. Catalyzes K(+)/H(+) antiport. In Escherichia coli O81 (strain ED1a), this protein is Glutathione-regulated potassium-efflux system protein KefB.